The sequence spans 308 residues: Folate transporter 1, chloroplastic (308 aa).

3 Solcar repeats span residues 4–94 (SWQW…AKQR), 104–192 (LSPA…LRKI), and 213–299 (ADYA…VLKL). Transmembrane regions (helical) follow at residues 10 to 30 (ATAGAVAGFATVAAMHSLDVV), 74 to 91 (VIGSTVSWGLYFFFYGRA), 110 to 130 (LASAAEAGALVCLCTNPIWLV), 164 to 184 (ALYKGIVPGLVLVSHGAIQFT), 216 to 236 (AALGGSSKVAAVLLTYPFQVI), and 274 to 293 (GLTANLLKNVPASSITFIVY).

The protein belongs to the mitochondrial carrier (TC 2.A.29) family. As to expression, ubiquitous.

The protein resides in the plastid. The protein localises to the chloroplast membrane. In terms of biological role, mediates folate import into chloroplast. The sequence is that of Folate transporter 1, chloroplastic (FOLT1) from Arabidopsis thaliana (Mouse-ear cress).